Here is a 362-residue protein sequence, read N- to C-terminus: Divinyl chlorophyll a/b light-harvesting protein PcbF (362 aa).

6 helical membrane passes run 27–47, 89–109, 150–170, 211–231, 251–271, and 316–336; these read FIGS…ANTL, IAFI…AGLL, FILG…VEWA, VMGG…FHIA, AVLS…AFWC, and LANV…WHAI.

Belongs to the PsbB/PsbC family. IsiA/Pcb subfamily. In terms of assembly, the antenna complex consists of divinyl chlorophylls (a and b) and divinyl chlorophyll a/b binding proteins and binds more divinyl chlorophyll b than does the antenna complex from high-light-adapted Prochlorococcus. Requires divinyl chlorophyll a as cofactor. It depends on divinyl chlorophyll b as a cofactor.

Its subcellular location is the cellular thylakoid membrane. Its function is as follows. The antenna complex functions as a light receptor, it captures and delivers excitation energy to photosystems II and I. The Prochlorales pcb genes are not related to higher plant LHCs. The protein is Divinyl chlorophyll a/b light-harvesting protein PcbF (pcbF) of Prochlorococcus marinus (strain NATL2A).